We begin with the raw amino-acid sequence, 202 residues long: uncharacterized protein (202 aa).

Disordered stretches follow at residues 1–21 (MAEF…LRVP) and 149–202 (LPAA…AAET).

This is an uncharacterized protein from Torque teno virus 1 (isolate TA278).